The following is a 134-amino-acid chain: STAG3-like protein 3 (134 aa).

One can recognise an SCD domain in the interval proline 10–methionine 95.

It belongs to the SCC3 family.

The protein resides in the nucleus. This is STAG3-like protein 3 (STAG3L3) from Homo sapiens (Human).